Consider the following 147-residue polypeptide: Small ribosomal subunit protein bS6 (147 aa).

Basic and acidic residues predominate over residues 97–141 (EEGPSAMMRKADRDRERDDRGGGFRGDREGGFRGDRGPRRPREEA). Positions 97–147 (EEGPSAMMRKADRDRERDDRGGGFRGDREGGFRGDRGPRRPREEAPAVVEE) are disordered.

Belongs to the bacterial ribosomal protein bS6 family.

In terms of biological role, binds together with bS18 to 16S ribosomal RNA. This chain is Small ribosomal subunit protein bS6, found in Nitrobacter hamburgensis (strain DSM 10229 / NCIMB 13809 / X14).